The sequence spans 324 residues: Probable UDP-sugar transporter protein SLC35A4 (324 aa).

At 1–18 (MSVEDGGVPGLGRPRKAR) the chain is on the cytoplasmic side. Residues 19-39 (WTLMLLLSTAMYGAHAPLLAL) form a helical membrane-spanning segment. Residues 40 to 52 (CHVDGRVPFRPSS) lie on the Lumenal side of the membrane. Residues 53–73 (AVLLTELTKLLLCALSLLVGW) traverse the membrane as a helical segment. The Cytoplasmic segment spans residues 74 to 85 (QAWPQGTPPWRQ). Residues 86–106 (AAPFALSALLYGANNNLVIYL) traverse the membrane as a helical segment. The Lumenal portion of the chain corresponds to 107 to 141 (QRYMDPSTYQVLSNLKIGSTALFYCLCLRHRLSAR). A helical transmembrane segment spans residues 142 to 162 (QGLALLLLMAAGACYAAGGLQ). Residues 163 to 180 (DPGTTLPGPPSAAATSPM) are Cytoplasmic-facing. Residues 181–201 (PLHITPLGLLLLILYCLISGL) form a helical membrane-spanning segment. Residues 202-214 (SSVYTELLMKRQR) lie on the Lumenal side of the membrane. The helical transmembrane segment at 215–235 (LPLALQNLFLYSFGVLLNLGL) threads the bilayer. Residues 236–248 (HAGGGPGPGLLEG) lie on the Cytoplasmic side of the membrane. The helical transmembrane segment at 249–271 (FSGWMALVVLSQALNGLLMSAVM) threads the bilayer. Over 272–275 (KHGS) the chain is Lumenal. Residues 276–298 (SITRLFVVSCSLVVNAVLSAALL) form a helical membrane-spanning segment. Residues 299 to 324 (RLQLTAAFFLATLLIGLAVRLYYGSR) are Cytoplasmic-facing.

Belongs to the nucleotide-sugar transporter family. SLC35A subfamily. Found in a complex with SLC35A2 and SLC35A3.

The protein resides in the golgi apparatus membrane. The enzyme catalyses CDP-L-ribitol(in) + CDP(out) = CDP-L-ribitol(out) + CDP(in). Functionally, mediates the transport of CDP-ribitol. Does not exhibit CMP-sialic acid, UDP-galactose and UDP-N-acetylglucosamine transport activity. This Bos taurus (Bovine) protein is Probable UDP-sugar transporter protein SLC35A4.